The sequence spans 110 residues: Thiosulfate sulfurtransferase GlpE (110 aa).

One can recognise a Rhodanese domain in the interval 19–107 (EDSLAVLVDI…WRRQALPIIQ (89 aa)). The active-site Cysteine persulfide intermediate is the cysteine 67.

This sequence belongs to the GlpE family.

It is found in the cytoplasm. The catalysed reaction is thiosulfate + hydrogen cyanide = thiocyanate + sulfite + 2 H(+). It carries out the reaction thiosulfate + [thioredoxin]-dithiol = [thioredoxin]-disulfide + hydrogen sulfide + sulfite + 2 H(+). Transferase that catalyzes the transfer of sulfur from thiosulfate to thiophilic acceptors such as cyanide or dithiols. May function in a CysM-independent thiosulfate assimilation pathway by catalyzing the conversion of thiosulfate to sulfite, which can then be used for L-cysteine biosynthesis. This Photobacterium profundum (strain SS9) protein is Thiosulfate sulfurtransferase GlpE.